The following is a 324-amino-acid chain: Beta-ketoacyl-[acyl-carrier-protein] synthase III (324 aa).

Active-site residues include Cys-112 and His-251. An ACP-binding region spans residues Gln-252–Arg-256. The active site involves Asn-281.

Belongs to the thiolase-like superfamily. FabH family. As to quaternary structure, homodimer.

Its subcellular location is the cytoplasm. The enzyme catalyses malonyl-[ACP] + acetyl-CoA + H(+) = 3-oxobutanoyl-[ACP] + CO2 + CoA. The protein operates within lipid metabolism; fatty acid biosynthesis. Catalyzes the condensation reaction of fatty acid synthesis by the addition to an acyl acceptor of two carbons from malonyl-ACP. Catalyzes the first condensation reaction which initiates fatty acid synthesis and may therefore play a role in governing the total rate of fatty acid production. Possesses both acetoacetyl-ACP synthase and acetyl transacylase activities. Its substrate specificity determines the biosynthesis of branched-chain and/or straight-chain of fatty acids. This chain is Beta-ketoacyl-[acyl-carrier-protein] synthase III, found in Clostridium perfringens (strain 13 / Type A).